The chain runs to 75 residues: Acyl carrier protein (75 aa).

Residues 1 to 75 (MIFEKVRDII…DVVEYLSNLE (75 aa)) enclose the Carrier domain. O-(pantetheine 4'-phosphoryl)serine is present on S35.

Belongs to the acyl carrier protein (ACP) family. In terms of processing, 4'-phosphopantetheine is transferred from CoA to a specific serine of apo-ACP by AcpS. This modification is essential for activity because fatty acids are bound in thioester linkage to the sulfhydryl of the prosthetic group.

The protein localises to the cytoplasm. It functions in the pathway lipid metabolism; fatty acid biosynthesis. Functionally, carrier of the growing fatty acid chain in fatty acid biosynthesis. The chain is Acyl carrier protein from Thermoanaerobacter pseudethanolicus (strain ATCC 33223 / 39E) (Clostridium thermohydrosulfuricum).